The primary structure comprises 286 residues: Polyamine aminopropyltransferase (286 aa).

In terms of domain architecture, PABS spans 9-242 (NGWIDEHHQG…GWWSWTFAAI (234 aa)). Residue Gln36 participates in S-methyl-5'-thioadenosine binding. His67 and Asp91 together coordinate spermidine. Residues Glu111 and 143 to 144 (NG) each bind S-methyl-5'-thioadenosine. The active-site Proton acceptor is Asp162. Pro169 contacts S-methyl-5'-thioadenosine.

The protein belongs to the spermidine/spermine synthase family. Homodimer or homotetramer.

The protein resides in the cytoplasm. It catalyses the reaction S-adenosyl 3-(methylsulfanyl)propylamine + putrescine = S-methyl-5'-thioadenosine + spermidine + H(+). The protein operates within amine and polyamine biosynthesis; spermidine biosynthesis; spermidine from putrescine: step 1/1. Catalyzes the irreversible transfer of a propylamine group from the amino donor S-adenosylmethioninamine (decarboxy-AdoMet) to putrescine (1,4-diaminobutane) to yield spermidine. This chain is Polyamine aminopropyltransferase, found in Prochlorococcus marinus (strain MIT 9313).